The sequence spans 1108 residues: Retinal guanylyl cyclase 2 (1108 aa).

The first 50 residues, 1–50, serve as a signal peptide directing secretion; it reads MFLGLGRFSRLVLWFAAFRKLLGHHGLASAKFLWCLCLLSVMSLPQQVWT. Residues 51–467 are Extracellular-facing; that stretch reads LPYKIGVVGP…KICHGGIDPA (417 aa). An intrachain disulfide couples C104 to C132. Residues 468 to 490 traverse the membrane as a helical segment; sequence FAMMVCLTLLIALLSINGFAYFI. Residues 491–1108 are Cytoplasmic-facing; it reads RRRINKIQLI…AERQLVRNKP (618 aa). The region spanning 532–812 is the Protein kinase domain; that stretch reads FQITSEVQSG…DEIFNQFKTF (281 aa). The region spanning 884–1014 is the Guanylate cyclase domain; that stretch reads TLYFSDIVGF…DTVNTASRME (131 aa).

This sequence belongs to the adenylyl cyclase class-4/guanylyl cyclase family. As to quaternary structure, homodimer. Interacts with RD3; promotes the exit of GUCY2F from the endoplasmic reticulum and its trafficking to the photoreceptor outer segments. In terms of processing, there are 9 conserved cysteine residues in sensory guanylate cyclases, 6 in the extracellular domain, which may be involved in intra- or interchain disulfide bonds. Retina. Localized exclusively in the outer nuclear layer and inner segments of the rod and cone photoreceptor cells.

It localises to the photoreceptor outer segment membrane. The catalysed reaction is GTP = 3',5'-cyclic GMP + diphosphate. With respect to regulation, activated by GUCA1B when free calcium ions concentration is low, and inhibited by GUCA1B when free calcium ions concentration is high. Inhibited by RD3. Its function is as follows. Responsible for the synthesis of cyclic GMP (cGMP) in rods and cones of photoreceptors. Plays an essential role in phototransduction, by mediating cGMP replenishment. May also participate in the trafficking of membrane-asociated proteins to the photoreceptor outer segment membrane. The polypeptide is Retinal guanylyl cyclase 2 (GUCY2F) (Homo sapiens (Human)).